The chain runs to 265 residues: MIYKKVHDEQKSLFFHKFKCQWVPRLGSFLPKRVRTLKIANGATAASVFHQKVKGQWVPRLGSFLPKRVRTLKIANGATAVSVFPHKVKGQWVPRLGSFLPKRVRTLKIANWATAVSVSLHTVKGQWVPRLGSFLLKWVRTLKFANGATAVSVFSDKAKDQWVPRLKFFLPIRMRTLKAVNKATAFPVFPHKLKGQWELRLKSFLIMRMRTLKSANKATTVPVFLHKVKDQWVPRLKYFLPIRMRTLKDANKATAVPVFPHKLKG.

This is Protein B8 (B8) from Homo sapiens (Human).